The sequence spans 401 residues: 4-hydroxy-3-methylbut-2-enyl diphosphate reductase (401 aa).

Cys66 provides a ligand contact to [4Fe-4S] cluster. Position 96 (His96) interacts with (2E)-4-hydroxy-3-methylbut-2-enyl diphosphate. Residue His96 coordinates dimethylallyl diphosphate. His96 provides a ligand contact to isopentenyl diphosphate. Cys157 provides a ligand contact to [4Fe-4S] cluster. His185 lines the (2E)-4-hydroxy-3-methylbut-2-enyl diphosphate pocket. Dimethylallyl diphosphate is bound at residue His185. His185 contributes to the isopentenyl diphosphate binding site. The Proton donor role is filled by Glu187. Thr250 lines the (2E)-4-hydroxy-3-methylbut-2-enyl diphosphate pocket. Cys288 is a binding site for [4Fe-4S] cluster. Residues Ser317, Ser318, Asn319, and Ser379 each contribute to the (2E)-4-hydroxy-3-methylbut-2-enyl diphosphate site. The dimethylallyl diphosphate site is built by Ser317, Ser318, Asn319, and Ser379. Residues Ser317, Ser318, Asn319, and Ser379 each contribute to the isopentenyl diphosphate site.

The protein belongs to the IspH family. The cofactor is [4Fe-4S] cluster.

The enzyme catalyses isopentenyl diphosphate + 2 oxidized [2Fe-2S]-[ferredoxin] + H2O = (2E)-4-hydroxy-3-methylbut-2-enyl diphosphate + 2 reduced [2Fe-2S]-[ferredoxin] + 2 H(+). It carries out the reaction dimethylallyl diphosphate + 2 oxidized [2Fe-2S]-[ferredoxin] + H2O = (2E)-4-hydroxy-3-methylbut-2-enyl diphosphate + 2 reduced [2Fe-2S]-[ferredoxin] + 2 H(+). The protein operates within isoprenoid biosynthesis; dimethylallyl diphosphate biosynthesis; dimethylallyl diphosphate from (2E)-4-hydroxy-3-methylbutenyl diphosphate: step 1/1. It participates in isoprenoid biosynthesis; isopentenyl diphosphate biosynthesis via DXP pathway; isopentenyl diphosphate from 1-deoxy-D-xylulose 5-phosphate: step 6/6. In terms of biological role, catalyzes the conversion of 1-hydroxy-2-methyl-2-(E)-butenyl 4-diphosphate (HMBPP) into a mixture of isopentenyl diphosphate (IPP) and dimethylallyl diphosphate (DMAPP). Acts in the terminal step of the DOXP/MEP pathway for isoprenoid precursor biosynthesis. The protein is 4-hydroxy-3-methylbut-2-enyl diphosphate reductase of Trichodesmium erythraeum (strain IMS101).